The primary structure comprises 108 residues: Ig kappa chain V-V region NQ5-89.4 (108 aa).

The interval 1–23 (DIQMTQTTSSLSASLGHRVTITC) is framework-1. Cys23 and Cys88 form a disulfide bridge. A complementarity-determining-1 region spans residues 24–34 (SASQDISNYLN). Residues 35–49 (WYQQKPDGTVKLLIY) form a framework-2 region. Residues 50-56 (YTSRLHS) are complementarity-determining-2. Positions 57–88 (GVPSRFSGSGSATDYSLTITNLQQEDXATYXC) are framework-3. Residues 89-97 (QQGNTLPYT) form a complementarity-determining-3 region. The interval 98–107 (FGGGTKLXIK) is framework-4.

In terms of biological role, anti-2-phenyl oxazolone (PHOX) Antibody. The polypeptide is Ig kappa chain V-V region NQ5-89.4 (Mus musculus (Mouse)).